Reading from the N-terminus, the 541-residue chain is MGQCCTGGGKAVAGDEAEPGTSKAAPPSRGTSSKNGSAKQQPCSPAAKAAATEAAAAASSSKKPAGPIGEVLERPMEEVRTTYSIGKELGRGQFGVTHLCTHKATGEKLACKTIAKRKLANKEDVDDVRREVQIMHHLSGQPNIVDLRGAYEDKHNVHLVMELCAGGELFDRIIARGHYTERAAAALLRAIVGIVHTCHSMGVIHRDLKPENFLLLSKGDDAPLKATDFGLSVFFKEGEVFRDIVGSAYYIAPEVLKRKYGPEADIWSIGVMLYIFLAGVPPFWAESENAIFAAILRGQIDLASEPWPKISSGAKDLVRKMLNINPKERLTAFQVLNHPWIKEDGDAPDVPLDNVVLNRLKQFRAMNQFKKAALRIIAGCLSEEEIKGLKEMFKNIDKDNSGTITLEELKNGLAKQGTKFSDNEIEQLMEAADADGNGIIDYEEFVTATVHMNKMDREEHLYTAFQYFDKDNSGYITKEELEQALKEQGLYDANEIKDVITDADSNNDGRIDYSEFVAMMRKGSGCAEATNPKKKRRDLVL.

Residues 1-11 (MGQCCTGGGKA) are compositionally biased toward gly residues. Positions 1-74 (MGQCCTGGGK…AGPIGEVLER (74 aa)) are disordered. Gly-2 is lipidated: N-myristoyl glycine. The segment covering 38–67 (AKQQPCSPAAKAAATEAAAAASSSKKPAGP) has biased composition (low complexity). A Protein kinase domain is found at 83-341 (YSIGKELGRG…AFQVLNHPWI (259 aa)). ATP is bound by residues 89 to 97 (LGRGQFGVT) and Lys-112. Residue Asp-207 is the Proton acceptor of the active site. The interval 347 to 377 (APDVPLDNVVLNRLKQFRAMNQFKKAALRII) is autoinhibitory domain. 4 EF-hand domains span residues 384–419 (EEIK…QGTK), 420–455 (FSDN…MNKM), 456–491 (DREE…QGLY), and 493–526 (ANEI…GSGC). Positions 397, 399, 401, 403, 408, 433, 435, 437, 444, 469, 471, 473, 475, 480, 504, 506, 508, 510, and 515 each coordinate Ca(2+).

This sequence belongs to the protein kinase superfamily. Ser/Thr protein kinase family. CDPK subfamily. As to expression, specifically expressed in heading panicles, spikelets and mature pollen grains. Not expressed in vegetative tissues.

It is found in the membrane. The enzyme catalyses L-seryl-[protein] + ATP = O-phospho-L-seryl-[protein] + ADP + H(+). It carries out the reaction L-threonyl-[protein] + ATP = O-phospho-L-threonyl-[protein] + ADP + H(+). Activated by calcium. Autophosphorylation may play an important role in the regulation of the kinase activity. Its function is as follows. May play a role in signal transduction pathways that involve calcium as a second messenger. This is Calcium-dependent protein kinase 26 from Oryza sativa subsp. japonica (Rice).